Consider the following 283-residue polypeptide: Putative sugar uptake protein BA_0200/GBAA_0200/BAS0200 (283 aa).

Helical transmembrane passes span 4-21 (LLALLPAIAWGNILLVSV), 26-48 (GAYSQTVGMTIGALFFATIMYVF), 52-71 (ALTMTILIVGFISGLFWALG), 84-106 (VSTTVTISTGMQLVATSIFGVIA), 110-132 (WTTTTTIILGTIAILLIVVGVVF), 151-173 (LLTLIVSTFGYLVYVIIIRWYNI), 178-195 (AILPQAVGMFVGAVVLTS), 208-230 (ALSGLLWGTGNLFLLLSLPRVGV), 234-253 (FPLSQTGIVISTFGAIVFLG), and 260-279 (QLIFIALGSVLIIGGAVLLG).

It belongs to the GRP transporter (TC 2.A.7.5) family.

The protein resides in the cell membrane. The polypeptide is Putative sugar uptake protein BA_0200/GBAA_0200/BAS0200 (Bacillus anthracis).